Consider the following 321-residue polypeptide: Coproporphyrin III ferrochelatase (321 aa).

Fe(2+) contacts are provided by His185 and Glu267.

This sequence belongs to the ferrochelatase family.

The protein resides in the cytoplasm. It carries out the reaction Fe-coproporphyrin III + 2 H(+) = coproporphyrin III + Fe(2+). It functions in the pathway porphyrin-containing compound metabolism; protoheme biosynthesis. Functionally, involved in coproporphyrin-dependent heme b biosynthesis. Catalyzes the insertion of ferrous iron into coproporphyrin III to form Fe-coproporphyrin III. This Lacticaseibacillus paracasei (strain ATCC 334 / BCRC 17002 / CCUG 31169 / CIP 107868 / KCTC 3260 / NRRL B-441) (Lactobacillus paracasei) protein is Coproporphyrin III ferrochelatase.